The primary structure comprises 290 residues: GTPase Era (290 aa).

In terms of domain architecture, Era-type G spans 2–169 (KSGFVSIIGR…KDKIYENLQE (168 aa)). The G1 stretch occupies residues 10 to 17 (GRPSTGKS). A GTP-binding site is contributed by 10-17 (GRPSTGKS). A G2 region spans residues 36 to 40 (QTTRN). The segment at 57–60 (DTPG) is G3. Residues 57 to 61 (DTPGF) and 119 to 122 (NKID) each bind GTP. The tract at residues 119 to 122 (NKID) is G4. The G5 stretch occupies residues 148-150 (ISA). One can recognise a KH type-2 domain in the interval 200–276 (LKEELPYSLY…DLFLQVKLRK (77 aa)).

It belongs to the TRAFAC class TrmE-Era-EngA-EngB-Septin-like GTPase superfamily. Era GTPase family. As to quaternary structure, monomer.

The protein localises to the cytoplasm. It is found in the cell inner membrane. In terms of biological role, an essential GTPase that binds both GDP and GTP, with rapid nucleotide exchange. Plays a role in 16S rRNA processing and 30S ribosomal subunit biogenesis and possibly also in cell cycle regulation and energy metabolism. The chain is GTPase Era from Borrelia turicatae (strain 91E135).